Reading from the N-terminus, the 291-residue chain is Halorhodopsin (291 aa).

The Extracellular segment spans residues 1 to 30 (MTETLPPVTESAVALQAEVTQRELFEFVLN). A helical membrane pass occupies residues 31 to 56 (DPLLASSLYINIALAGLSILLFVFMT). At 57 to 62 (RGLDDP) the chain is on the cytoplasmic side. The helical transmembrane segment at 63 to 86 (RAKLIAVSTILVPVVSIASYTGLA) threads the bilayer. At 87 to 120 (SGLTISVLEMPAGHFAEGSSVMLGGEEVDGVVTM) the chain is on the extracellular side. The chain crosses the membrane as a helical span at residues 121–142 (WGRYLTWALSTPMILLALGLLA). The Cytoplasmic segment spans residues 143–145 (GSN). Residues 146–169 (ATKLFTAITFDIAMCVTGLAAALT) traverse the membrane as a helical segment. Over 170–172 (TSS) the chain is Extracellular. Residues 173–195 (HLMRWFWYAISCACFLVVLYILL) form a helical membrane-spanning segment. The Cytoplasmic segment spans residues 196-207 (VEWAQDAKAAGT). The chain crosses the membrane as a helical span at residues 208 to 231 (ADMFNTLKLLTVVMWLGYPIVWAL). The Extracellular portion of the chain corresponds to 232–240 (GVEGIAVLP). A helical transmembrane segment spans residues 241–269 (VGVTSWGYSFLDIVAKYIFAFLLLNYLTS). Lysine 256 bears the N6-(retinylidene)lysine mark. Topologically, residues 270–291 (NESVVSGSILDVPSASGTPADD) are cytoplasmic.

Belongs to the archaeal/bacterial/fungal opsin family.

It localises to the cell membrane. Its function is as follows. Light-driven anion pump. Binding affinity for the anions is in the order, bromide &gt; chloride &gt; nitrate &gt; azide &gt; bromate and binding is pH dependent. The protein is Halorhodopsin (hop) of Natronomonas pharaonis (Natronobacterium pharaonis).